The sequence spans 312 residues: Homoserine O-succinyltransferase (312 aa).

Catalysis depends on Cys142, which acts as the Acyl-thioester intermediate. Substrate-binding residues include Lys163 and Ser192. The Proton acceptor role is filled by His235. Residue Glu237 is part of the active site. Arg249 is a substrate binding site.

The protein belongs to the MetA family.

The protein localises to the cytoplasm. The enzyme catalyses L-homoserine + succinyl-CoA = O-succinyl-L-homoserine + CoA. Its pathway is amino-acid biosynthesis; L-methionine biosynthesis via de novo pathway; O-succinyl-L-homoserine from L-homoserine: step 1/1. Its function is as follows. Transfers a succinyl group from succinyl-CoA to L-homoserine, forming succinyl-L-homoserine. The sequence is that of Homoserine O-succinyltransferase from Alteromonas mediterranea (strain DSM 17117 / CIP 110805 / LMG 28347 / Deep ecotype).